The chain runs to 353 residues: Variable large protein 17 (353 aa).

The signal sequence occupies residues 1–18; the sequence is MRKRISAIIMTLFMVLVS. C19 carries the N-palmitoyl cysteine lipid modification. The S-diacylglycerol cysteine moiety is linked to residue C19. A disordered region spans residues 332–353; sequence EDKSVEATNTAEATTSGQQAKN. Residues 337 to 353 show a composition bias toward polar residues; that stretch reads EATNTAEATTSGQQAKN.

This sequence belongs to the variable large protein (Vlp) family. Delta subfamily.

It localises to the cell outer membrane. Functionally, the Vlp and Vsp proteins are antigenically distinct proteins, only one vlp or vsp gene is transcriptionally active at any one time. Switching between these genes is a mechanism of host immune response evasion. This Borrelia hermsii protein is Variable large protein 17.